The chain runs to 247 residues: tRNA (guanine-N(7)-)-methyltransferase (247 aa).

Residues glycine 70, 93–94, 128–129, and leucine 148 each bind S-adenosyl-L-methionine; these read EI and NA. The active site involves aspartate 151. An S-adenosyl-L-methionine-binding site is contributed by 226–228; that stretch reads SEE.

Belongs to the class I-like SAM-binding methyltransferase superfamily. TrmB family.

The protein localises to the nucleus. The catalysed reaction is guanosine(46) in tRNA + S-adenosyl-L-methionine = N(7)-methylguanosine(46) in tRNA + S-adenosyl-L-homocysteine. Its pathway is tRNA modification; N(7)-methylguanine-tRNA biosynthesis. In terms of biological role, catalyzes the formation of N(7)-methylguanine at position 46 (m7G46) in tRNA. This Drosophila virilis (Fruit fly) protein is tRNA (guanine-N(7)-)-methyltransferase.